The following is a 251-amino-acid chain: MLIKQKGIIIKTIDYGESDKIITILNEYGAKVPLMVRRAKKSKSGLQANTQLFVYGLFIYSKWKGMGTLSSVDVIDQNYHLRLDIYESSYASLCTETIDRSMETDGISKNSYELLHFVLDKIRQGISAQLMSVVVLLKCMTKFGFNAVFDRCVITQSEDQSKLVGYSFKYDGAISENVAYKDTHAFQLSNKTLYLLDILQKLPINQMSSLSIHETIVDEMSELVILLYKEYAGMYFKSQKLINQLYRLDNL.

The protein belongs to the RecO family.

In terms of biological role, involved in DNA repair and RecF pathway recombination. This is DNA repair protein RecO from Staphylococcus saprophyticus subsp. saprophyticus (strain ATCC 15305 / DSM 20229 / NCIMB 8711 / NCTC 7292 / S-41).